The sequence spans 665 residues: Methionine--tRNA ligase (665 aa).

Residues 13–23 (YYPSGKLHIGS) carry the 'HIGH' region motif. The 'KMSKS' region signature appears at 309 to 313 (KMSKS). Position 312 (K312) interacts with ATP. In terms of domain architecture, tRNA-binding spans 562-665 (DFDKVEIRVA…PAVPNGSVIG (104 aa)).

It belongs to the class-I aminoacyl-tRNA synthetase family. MetG type 2B subfamily. In terms of assembly, homodimer.

The protein localises to the cytoplasm. The catalysed reaction is tRNA(Met) + L-methionine + ATP = L-methionyl-tRNA(Met) + AMP + diphosphate. Functionally, is required not only for elongation of protein synthesis but also for the initiation of all mRNA translation through initiator tRNA(fMet) aminoacylation. This Streptococcus pneumoniae serotype 4 (strain ATCC BAA-334 / TIGR4) protein is Methionine--tRNA ligase (metG).